The chain runs to 338 residues: tRNA N6-adenosine threonylcarbamoyltransferase (338 aa).

The Fe cation site is built by His111 and His115. Substrate contacts are provided by residues 134–138 (VVSGG), Asp167, Gly180, Asp184, and Asn272. Fe cation is bound at residue Asp300.

Belongs to the KAE1 / TsaD family. Requires Fe(2+) as cofactor.

It localises to the cytoplasm. The enzyme catalyses L-threonylcarbamoyladenylate + adenosine(37) in tRNA = N(6)-L-threonylcarbamoyladenosine(37) in tRNA + AMP + H(+). Required for the formation of a threonylcarbamoyl group on adenosine at position 37 (t(6)A37) in tRNAs that read codons beginning with adenine. Is involved in the transfer of the threonylcarbamoyl moiety of threonylcarbamoyl-AMP (TC-AMP) to the N6 group of A37, together with TsaE and TsaB. TsaD likely plays a direct catalytic role in this reaction. In Syntrophus aciditrophicus (strain SB), this protein is tRNA N6-adenosine threonylcarbamoyltransferase.